A 674-amino-acid polypeptide reads, in one-letter code: Xaa-Pro aminopeptidase 2 (674 aa).

An N-terminal signal peptide occupies residues 1 to 22 (MAQAYWQCYPWLVLLCACAWSY). An N-linked (GlcNAc...) asparagine glycan is attached at Asn65. Residue Arg116 participates in substrate binding. N-linked (GlcNAc...) asparagine glycans are attached at residues Asn278 and Asn293. His430 contributes to the substrate binding site. Positions 450, 461, and 524 each coordinate Zn(2+). Substrate is bound by residues His524, His533, and Glu555. The Zn(2+) site is built by Glu555 and Glu569. Ala650 carries the GPI-anchor amidated alanine lipid modification. Residues 651 to 674 (SAPHTTSLASMWVASALAILSWSC) constitute a propeptide, removed in mature form.

This sequence belongs to the peptidase M24B family. In terms of assembly, homotrimer. Zn(2+) is required as a cofactor. In terms of processing, N-glycosylated. In terms of tissue distribution, expressed strongly in lung, liver and heart, and at lower levels in kidney, testis, brain, spleen and skeletal muscle.

The protein resides in the cell membrane. The enzyme catalyses Release of any N-terminal amino acid, including proline, that is linked to proline, even from a dipeptide or tripeptide.. Inhibited by the chelating agents 1,10-phenanthroline and EDTA. Inhibited by the thiol-containing compounds 2-mercaptoethanol and dithiothreitol. Also inhibited by apstatin, captopril and p-(ch1oromercuri)benzenesulfonic acid. Weakly inhibited by D,L-2-mercaptomethyl-3-guanidinoethylthiopropanoic acid and N-[l-(R,S)-carboxy-(2-phenylethyl)]-Ala-Ala-Phe-p-aminobenzoate. Inhibited by ramiprilat and enalaprilat, in a Mn(2+)-dependent manner. Metal ions have a complex substrate- and concentration-dependent effect on activity. Activity towards Arg-Pro-Pro and Gly-Pro-Hyp is stimulated by Mn(2+) ion concentrations of 10-100 uM and then inhibited at Mn(2+) concentrations of 1-2 mM. Mn(2+) concentrations in excess of 2 mM stimulate activity towards Gly-Pro-Hyp but inhibit activity towards Arg-Pro-Pro. Zn(2+) and Co(2+) ions also inhibit activity towards Arg-Pro-Pro at high concentrations. Activity towards bradykinin is inhibited by Mn(2+) concentrations in excess of 1 mM. Membrane-bound metalloprotease which catalyzes the removal of a penultimate prolyl residue from the N-termini of peptides, such as Arg-Pro-Pro. May play a role in the metabolism of the vasodilator bradykinin. The chain is Xaa-Pro aminopeptidase 2 from Rattus norvegicus (Rat).